The primary structure comprises 403 residues: Acetate kinase (403 aa).

Asparagine 13 contacts Mg(2+). Lysine 20 provides a ligand contact to ATP. Arginine 94 is a substrate binding site. The active-site Proton donor/acceptor is aspartate 153. Residues 213–217 (HLGNG), 288–290 (DFR), and 336–340 (GIGEN) each bind ATP. Glutamate 390 serves as a coordination point for Mg(2+).

This sequence belongs to the acetokinase family. Homodimer. Mg(2+) serves as cofactor. Mn(2+) is required as a cofactor.

The protein localises to the cytoplasm. The enzyme catalyses acetate + ATP = acetyl phosphate + ADP. The protein operates within metabolic intermediate biosynthesis; acetyl-CoA biosynthesis; acetyl-CoA from acetate: step 1/2. Catalyzes the formation of acetyl phosphate from acetate and ATP. Can also catalyze the reverse reaction. The sequence is that of Acetate kinase from Buchnera aphidicola subsp. Schizaphis graminum (strain Sg).